The primary structure comprises 372 residues: Glutamate 5-kinase (372 aa).

ATP is bound at residue K14. Residues S55, D142, and N154 each coordinate substrate. Residues 174–175 (SD) and 216–222 (TGGMETK) each bind ATP. The 79-residue stretch at 279 to 357 (QGSIIVDLGA…WEIADVLGHK (79 aa)) folds into the PUA domain.

Belongs to the glutamate 5-kinase family.

It is found in the cytoplasm. The enzyme catalyses L-glutamate + ATP = L-glutamyl 5-phosphate + ADP. Its pathway is amino-acid biosynthesis; L-proline biosynthesis; L-glutamate 5-semialdehyde from L-glutamate: step 1/2. Functionally, catalyzes the transfer of a phosphate group to glutamate to form L-glutamate 5-phosphate. The chain is Glutamate 5-kinase from Carboxydothermus hydrogenoformans (strain ATCC BAA-161 / DSM 6008 / Z-2901).